The primary structure comprises 170 residues: Histone H1.9 (170 aa).

The H15 domain occupies 34–108 (RKPTMSYVIL…GASGSLCLCK (75 aa)). A Phosphoserine modification is found at S56. A disordered region spans residues 118–140 (AKRCQDRQKSQKPQKPGQRESEP).

This sequence belongs to the histone H1/H5 family. As to expression, expressed exclusively in the testis by haploid germ cells (at protein level).

It localises to the nucleus. It is found in the chromosome. In terms of biological role, DNA-binding protein that may be implicated in chromatin remodeling and/or transcriptional regulation during spermiogenesis, the process of spermatid maturation into spermatozoa. This Mus musculus (Mouse) protein is Histone H1.9.